A 282-amino-acid polypeptide reads, in one-letter code: Bifunctional protein FolD (282 aa).

NADP(+) is bound by residues 165 to 167 and I231; that span reads GAS.

The protein belongs to the tetrahydrofolate dehydrogenase/cyclohydrolase family. Homodimer.

It carries out the reaction (6R)-5,10-methylene-5,6,7,8-tetrahydrofolate + NADP(+) = (6R)-5,10-methenyltetrahydrofolate + NADPH. The catalysed reaction is (6R)-5,10-methenyltetrahydrofolate + H2O = (6R)-10-formyltetrahydrofolate + H(+). The protein operates within one-carbon metabolism; tetrahydrofolate interconversion. Catalyzes the oxidation of 5,10-methylenetetrahydrofolate to 5,10-methenyltetrahydrofolate and then the hydrolysis of 5,10-methenyltetrahydrofolate to 10-formyltetrahydrofolate. The polypeptide is Bifunctional protein FolD (Francisella tularensis subsp. tularensis (strain FSC 198)).